The sequence spans 373 residues: Anhydro-N-acetylmuramic acid kinase (373 aa).

12–19 contributes to the ATP binding site; that stretch reads GTSLDGVD.

Belongs to the anhydro-N-acetylmuramic acid kinase family.

The catalysed reaction is 1,6-anhydro-N-acetyl-beta-muramate + ATP + H2O = N-acetyl-D-muramate 6-phosphate + ADP + H(+). It functions in the pathway amino-sugar metabolism; 1,6-anhydro-N-acetylmuramate degradation. The protein operates within cell wall biogenesis; peptidoglycan recycling. Its function is as follows. Catalyzes the specific phosphorylation of 1,6-anhydro-N-acetylmuramic acid (anhMurNAc) with the simultaneous cleavage of the 1,6-anhydro ring, generating MurNAc-6-P. Is required for the utilization of anhMurNAc either imported from the medium or derived from its own cell wall murein, and thus plays a role in cell wall recycling. The polypeptide is Anhydro-N-acetylmuramic acid kinase (Salmonella agona (strain SL483)).